The chain runs to 122 residues: Large ribosomal subunit protein uL14 (122 aa).

This sequence belongs to the universal ribosomal protein uL14 family. In terms of assembly, part of the 50S ribosomal subunit. Forms a cluster with proteins L3 and L19. In the 70S ribosome, L14 and L19 interact and together make contacts with the 16S rRNA in bridges B5 and B8.

Its function is as follows. Binds to 23S rRNA. Forms part of two intersubunit bridges in the 70S ribosome. The protein is Large ribosomal subunit protein uL14 of Borreliella afzelii (strain PKo) (Borrelia afzelii).